Reading from the N-terminus, the 503-residue chain is Probable cytosol aminopeptidase (503 aa).

Mn(2+) is bound by residues lysine 270 and aspartate 275. Lysine 282 is a catalytic residue. The Mn(2+) site is built by aspartate 293, aspartate 352, and glutamate 354. Arginine 356 is a catalytic residue.

It belongs to the peptidase M17 family. It depends on Mn(2+) as a cofactor.

Its subcellular location is the cytoplasm. It catalyses the reaction Release of an N-terminal amino acid, Xaa-|-Yaa-, in which Xaa is preferably Leu, but may be other amino acids including Pro although not Arg or Lys, and Yaa may be Pro. Amino acid amides and methyl esters are also readily hydrolyzed, but rates on arylamides are exceedingly low.. The enzyme catalyses Release of an N-terminal amino acid, preferentially leucine, but not glutamic or aspartic acids.. Functionally, presumably involved in the processing and regular turnover of intracellular proteins. Catalyzes the removal of unsubstituted N-terminal amino acids from various peptides. This is Probable cytosol aminopeptidase from Klebsiella pneumoniae (strain 342).